Consider the following 184-residue polypeptide: Photosystem I assembly protein Ycf4 (184 aa).

The next 2 membrane-spanning stretches (helical) occupy residues 19–39 (ISNFCWACILFLGSLGFLLVG) and 57–77 (IVFFPQGIVMCFYGIAGLFIS).

The protein belongs to the Ycf4 family.

It localises to the plastid. The protein resides in the chloroplast thylakoid membrane. In terms of biological role, seems to be required for the assembly of the photosystem I complex. In Nymphaea alba (White water-lily), this protein is Photosystem I assembly protein Ycf4.